Reading from the N-terminus, the 410-residue chain is Subtilisin-like protease CPC735_003880 (410 aa).

The signal sequence occupies residues 1-17 (MKLLKSSLLLLLPFVTA). Residues 18 to 118 (NPIPSEDKDI…VTPDRKVYLA (101 aa)) constitute a propeptide that is removed on maturation. Positions 31 to 118 (RYIVTLKDGI…VTPDRKVYLA (88 aa)) constitute an Inhibitor I9 domain. The region spanning 127 to 410 (GYNLGHMSSK…IQEMNETVIA (284 aa)) is the Peptidase S8 domain. Asp159 acts as the Charge relay system in catalysis. A glycan (N-linked (GlcNAc...) asparagine) is linked at Asn182. His191 functions as the Charge relay system in the catalytic mechanism. 3 N-linked (GlcNAc...) asparagine glycosylation sites follow: Asn238, Asn251, and Asn338. Ser347 serves as the catalytic Charge relay system. Asn405 is a glycosylation site (N-linked (GlcNAc...) asparagine).

The protein belongs to the peptidase S8 family.

The protein localises to the secreted. Functionally, secreted subtilisin-like serine protease with keratinolytic activity that contributes to pathogenicity. The polypeptide is Subtilisin-like protease CPC735_003880 (Coccidioides posadasii (strain C735) (Valley fever fungus)).